Reading from the N-terminus, the 418-residue chain is Putative competence-damage inducible protein (418 aa).

This sequence belongs to the CinA family.

The chain is Putative competence-damage inducible protein from Streptococcus pneumoniae serotype 19F (strain G54).